Reading from the N-terminus, the 467-residue chain is Cysteine--tRNA ligase (467 aa).

C29 is a binding site for Zn(2+). Positions 31-41 (ATVQGEPHIGH) match the 'HIGH' region motif. Zn(2+) contacts are provided by C207, H232, and E236. Positions 263-267 (KMSKS) match the 'KMSKS' region motif. Position 266 (K266) interacts with ATP. The interval 446-467 (IDVTDTPNGPEWSLRTARGKAN) is disordered.

This sequence belongs to the class-I aminoacyl-tRNA synthetase family. As to quaternary structure, monomer. The cofactor is Zn(2+).

It localises to the cytoplasm. The enzyme catalyses tRNA(Cys) + L-cysteine + ATP = L-cysteinyl-tRNA(Cys) + AMP + diphosphate. This Nocardia farcinica (strain IFM 10152) protein is Cysteine--tRNA ligase.